A 146-amino-acid polypeptide reads, in one-letter code: Flagellar assembly factor FliW (146 aa).

It belongs to the FliW family. As to quaternary structure, interacts with translational regulator CsrA and flagellin(s).

The protein resides in the cytoplasm. In terms of biological role, acts as an anti-CsrA protein, binds CsrA and prevents it from repressing translation of its target genes, one of which is flagellin. Binds to flagellin and participates in the assembly of the flagellum. This Shouchella clausii (strain KSM-K16) (Alkalihalobacillus clausii) protein is Flagellar assembly factor FliW.